The primary structure comprises 504 residues: 2-isopropylmalate synthase (504 aa).

A Pyruvate carboxyltransferase domain is found at 6-267; sequence IIVFDTTLRD…YTDINFKEIY (262 aa). 4 residues coordinate Mn(2+): D15, H201, H203, and N237. Residues 391-504 form a regulatory domain region; that stretch reads EIIALSSSEC…ALNSYISMKQ (114 aa).

Belongs to the alpha-IPM synthase/homocitrate synthase family. LeuA type 1 subfamily. Homodimer. Mn(2+) serves as cofactor.

The protein resides in the cytoplasm. The catalysed reaction is 3-methyl-2-oxobutanoate + acetyl-CoA + H2O = (2S)-2-isopropylmalate + CoA + H(+). It functions in the pathway amino-acid biosynthesis; L-leucine biosynthesis; L-leucine from 3-methyl-2-oxobutanoate: step 1/4. Functionally, catalyzes the condensation of the acetyl group of acetyl-CoA with 3-methyl-2-oxobutanoate (2-ketoisovalerate) to form 3-carboxy-3-hydroxy-4-methylpentanoate (2-isopropylmalate). This Campylobacter hominis (strain ATCC BAA-381 / DSM 21671 / CCUG 45161 / LMG 19568 / NCTC 13146 / CH001A) protein is 2-isopropylmalate synthase.